Here is a 353-residue protein sequence, read N- to C-terminus: B1 bradykinin receptor (353 aa).

The Extracellular segment spans residues 1–40 (MASSWPPLELQSSNQSQLFPQNATACDNAPEAWDLLHRVL). 2 N-linked (GlcNAc...) asparagine glycosylation sites follow: N14 and N22. The chain crosses the membrane as a helical span at residues 41 to 64 (PTFIISICFFGLLGNLFVLLVFLL). Residues 65-73 (PRRQLNVAE) lie on the Cytoplasmic side of the membrane. A helical transmembrane segment spans residues 74-98 (IYLANLAASDLVFVLGLPFWAENIW). At 99 to 111 (NQFNWPFGALLCR) the chain is on the extracellular side. An intrachain disulfide couples C110 to C189. Residues 112 to 133 (VINGVIKANLFISIFLVVAISQ) traverse the membrane as a helical segment. Residues 134–155 (DRYRVLVHPMASRRQQRRRQAR) are Cytoplasmic-facing. The helical transmembrane segment at 156 to 178 (VTCVLIWVVGGLLSIPTFLLRSI) threads the bilayer. Residues 179–199 (QAVPDLNITACILLLPHEAWH) are Extracellular-facing. An N-linked (GlcNAc...) asparagine glycan is attached at N185. The helical transmembrane segment at 200-226 (FARIVELNILGFLLPLAAIVFFNYHIL) threads the bilayer. The Cytoplasmic segment spans residues 227–247 (ASLRTREEVSRTRCGGRKDSK). A helical membrane pass occupies residues 248–272 (TTALILTLVVAFLVCWAPYHFFAFL). The Extracellular portion of the chain corresponds to 273–291 (EFLFQVQAVRGCFWEDFID). The helical transmembrane segment at 292 to 314 (LGLQLANFFAFTNSSLNPVIYVF) threads the bilayer. Over 315–353 (VGRLFRTKVWELYKQCTPKSLAPISSSHRKEIFQLFWRN) the chain is Cytoplasmic. C330 carries the S-palmitoyl cysteine lipid modification.

This sequence belongs to the G-protein coupled receptor 1 family. Bradykinin receptor subfamily. BDKRB1 sub-subfamily.

The protein localises to the cell membrane. Functionally, this is a receptor for bradykinin. Could be a factor in chronic pain and inflammation. The chain is B1 bradykinin receptor (BDKRB1) from Homo sapiens (Human).